The primary structure comprises 249 residues: 5'-nucleotidase SurE (249 aa).

The a divalent metal cation site is built by Asp-9, Asp-10, Ser-40, and Asn-92.

This sequence belongs to the SurE nucleotidase family. The cofactor is a divalent metal cation.

Its subcellular location is the cytoplasm. It catalyses the reaction a ribonucleoside 5'-phosphate + H2O = a ribonucleoside + phosphate. Nucleotidase that shows phosphatase activity on nucleoside 5'-monophosphates. This chain is 5'-nucleotidase SurE, found in Shewanella oneidensis (strain ATCC 700550 / JCM 31522 / CIP 106686 / LMG 19005 / NCIMB 14063 / MR-1).